We begin with the raw amino-acid sequence, 380 residues long: Cytochrome b (380 aa).

4 helical membrane-spanning segments follow: residues phenylalanine 34–methionine 54, tryptophan 78–isoleucine 99, tryptophan 114–leucine 134, and phenylalanine 179–threonine 199. Heme b-binding residues include histidine 84 and histidine 98. Heme b contacts are provided by histidine 183 and histidine 197. Residue histidine 202 participates in a ubiquinone binding. A run of 4 helical transmembrane segments spans residues isoleucine 227–serine 247, leucine 289–histidine 309, leucine 321–serine 341, and phenylalanine 348–proline 368.

It belongs to the cytochrome b family. In terms of assembly, the cytochrome bc1 complex contains 11 subunits: 3 respiratory subunits (MT-CYB, CYC1 and UQCRFS1), 2 core proteins (UQCRC1 and UQCRC2) and 6 low-molecular weight proteins (UQCRH/QCR6, UQCRB/QCR7, UQCRQ/QCR8, UQCR10/QCR9, UQCR11/QCR10 and a cleavage product of UQCRFS1). This cytochrome bc1 complex then forms a dimer. Requires heme b as cofactor.

The protein resides in the mitochondrion inner membrane. Functionally, component of the ubiquinol-cytochrome c reductase complex (complex III or cytochrome b-c1 complex) that is part of the mitochondrial respiratory chain. The b-c1 complex mediates electron transfer from ubiquinol to cytochrome c. Contributes to the generation of a proton gradient across the mitochondrial membrane that is then used for ATP synthesis. The sequence is that of Cytochrome b (MT-CYB) from Alectoris rufa (Red-legged partridge).